The following is a 123-amino-acid chain: Small ribosomal subunit protein uS12 (123 aa).

Asp89 carries the 3-methylthioaspartic acid modification.

It belongs to the universal ribosomal protein uS12 family. As to quaternary structure, part of the 30S ribosomal subunit. Contacts proteins S8 and S17. May interact with IF1 in the 30S initiation complex.

Functionally, with S4 and S5 plays an important role in translational accuracy. Interacts with and stabilizes bases of the 16S rRNA that are involved in tRNA selection in the A site and with the mRNA backbone. Located at the interface of the 30S and 50S subunits, it traverses the body of the 30S subunit contacting proteins on the other side and probably holding the rRNA structure together. The combined cluster of proteins S8, S12 and S17 appears to hold together the shoulder and platform of the 30S subunit. This chain is Small ribosomal subunit protein uS12, found in Rhodopseudomonas palustris (strain HaA2).